The primary structure comprises 159 residues: uncharacterized protein (159 aa).

The helical transmembrane segment at 4-24 (QIALILSLIILIFFIYKFAMF) threads the bilayer.

The protein resides in the membrane. This is an uncharacterized protein from Acheta domesticus (House cricket).